Consider the following 586-residue polypeptide: 2-succinyl-5-enolpyruvyl-6-hydroxy-3-cyclohexene-1-carboxylate synthase (586 aa).

This sequence belongs to the TPP enzyme family. MenD subfamily. Homodimer. Requires Mg(2+) as cofactor. Mn(2+) is required as a cofactor. The cofactor is thiamine diphosphate.

The catalysed reaction is isochorismate + 2-oxoglutarate + H(+) = 5-enolpyruvoyl-6-hydroxy-2-succinyl-cyclohex-3-ene-1-carboxylate + CO2. Its pathway is quinol/quinone metabolism; 1,4-dihydroxy-2-naphthoate biosynthesis; 1,4-dihydroxy-2-naphthoate from chorismate: step 2/7. The protein operates within cofactor biosynthesis; phylloquinone biosynthesis. Catalyzes the thiamine diphosphate-dependent decarboxylation of 2-oxoglutarate and the subsequent addition of the resulting succinic semialdehyde-thiamine pyrophosphate anion to isochorismate to yield 2-succinyl-5-enolpyruvyl-6-hydroxy-3-cyclohexene-1-carboxylate (SEPHCHC). The protein is 2-succinyl-5-enolpyruvyl-6-hydroxy-3-cyclohexene-1-carboxylate synthase of Acaryochloris marina (strain MBIC 11017).